Reading from the N-terminus, the 540-residue chain is Methionine--tRNA ligase 1 (540 aa).

Positions 10–20 (PYANGSLHLGH) match the 'HIGH' region motif. 4 residues coordinate Zn(2+): Cys141, Cys144, Cys153, and Cys156. A 'KMSKS' region motif is present at residues 327-331 (KISTS). Residue Thr330 coordinates ATP.

The protein belongs to the class-I aminoacyl-tRNA synthetase family. MetG type 1 subfamily. Monomer. The cofactor is Zn(2+).

Its subcellular location is the cytoplasm. The enzyme catalyses tRNA(Met) + L-methionine + ATP = L-methionyl-tRNA(Met) + AMP + diphosphate. In terms of biological role, is required not only for elongation of protein synthesis but also for the initiation of all mRNA translation through initiator tRNA(fMet) aminoacylation. The polypeptide is Methionine--tRNA ligase 1 (Alkaliphilus oremlandii (strain OhILAs) (Clostridium oremlandii (strain OhILAs))).